The following is a 357-amino-acid chain: 3-isopropylmalate dehydrogenase (357 aa).

76 to 89 is an NAD(+) binding site; that stretch reads GPQWDTIDPSLRPE. Positions 96, 106, 134, and 224 each coordinate substrate. Mg(2+) contacts are provided by Asp-224, Asp-248, and Asp-252. 282-294 is a binding site for NAD(+); the sequence is GSAPDIAGKGIAN.

The protein belongs to the isocitrate and isopropylmalate dehydrogenases family. LeuB type 1 subfamily. Homodimer. It depends on Mg(2+) as a cofactor. The cofactor is Mn(2+).

The protein resides in the cytoplasm. The catalysed reaction is (2R,3S)-3-isopropylmalate + NAD(+) = 4-methyl-2-oxopentanoate + CO2 + NADH. It participates in amino-acid biosynthesis; L-leucine biosynthesis; L-leucine from 3-methyl-2-oxobutanoate: step 3/4. Functionally, catalyzes the oxidation of 3-carboxy-2-hydroxy-4-methylpentanoate (3-isopropylmalate) to 3-carboxy-4-methyl-2-oxopentanoate. The product decarboxylates to 4-methyl-2 oxopentanoate. In Xanthomonas oryzae pv. oryzae (strain MAFF 311018), this protein is 3-isopropylmalate dehydrogenase.